The sequence spans 257 residues: 1-(5-phosphoribosyl)-5-[(5-phosphoribosylamino)methylideneamino] imidazole-4-carboxamide isomerase (257 aa).

Residue aspartate 8 is the Proton acceptor of the active site. Catalysis depends on aspartate 129, which acts as the Proton donor.

This sequence belongs to the HisA/HisF family.

Its subcellular location is the cytoplasm. It carries out the reaction 1-(5-phospho-beta-D-ribosyl)-5-[(5-phospho-beta-D-ribosylamino)methylideneamino]imidazole-4-carboxamide = 5-[(5-phospho-1-deoxy-D-ribulos-1-ylimino)methylamino]-1-(5-phospho-beta-D-ribosyl)imidazole-4-carboxamide. It functions in the pathway amino-acid biosynthesis; L-histidine biosynthesis; L-histidine from 5-phospho-alpha-D-ribose 1-diphosphate: step 4/9. This chain is 1-(5-phosphoribosyl)-5-[(5-phosphoribosylamino)methylideneamino] imidazole-4-carboxamide isomerase, found in Gloeothece citriformis (strain PCC 7424) (Cyanothece sp. (strain PCC 7424)).